Reading from the N-terminus, the 664-residue chain is Sorbicillinoid biosynthetic cluster transcription factor sor3 (664 aa).

Residues 40–67 constitute a DNA-binding region (zn(2)-C6 fungal-type); the sequence is CQSCRASKVKCDGGRPVCARCQKRGRAC. Residues 68-102 form a disordered region; the sequence is SYSQHDAASPRGRGRQRAKAPTRQPRPIRSRASVE.

The protein localises to the nucleus. Functionally, transcription factor that acts in concert with sor4 which is a transcriptional activator of the gene cluster that mediates the biosynthesis of sorbicillinoids, a diverse group of yellow secondary metabolites that restrict growth of competing pathogenic fungi but not of bacteria. Regulates the cluster genes in a light dependent manner. Also plays a direct or indirect role in regulation of paracelsin biosynthesis and cellulase gene expression. The sequence is that of Sorbicillinoid biosynthetic cluster transcription factor sor3 from Hypocrea jecorina (strain QM6a) (Trichoderma reesei).